The sequence spans 338 residues: tRNA(Ile)-lysidine synthase (338 aa).

An ATP-binding site is contributed by 23–28; it reads SGGLDS.

This sequence belongs to the tRNA(Ile)-lysidine synthase family.

The protein resides in the cytoplasm. It catalyses the reaction cytidine(34) in tRNA(Ile2) + L-lysine + ATP = lysidine(34) in tRNA(Ile2) + AMP + diphosphate + H(+). Ligates lysine onto the cytidine present at position 34 of the AUA codon-specific tRNA(Ile) that contains the anticodon CAU, in an ATP-dependent manner. Cytidine is converted to lysidine, thus changing the amino acid specificity of the tRNA from methionine to isoleucine. The sequence is that of tRNA(Ile)-lysidine synthase from Helicobacter pylori (strain J99 / ATCC 700824) (Campylobacter pylori J99).